A 486-amino-acid chain; its full sequence is LON peptidase N-terminal domain and RING finger protein C14F5.10c (486 aa).

The RING-type zinc-finger motif lies at 169–207; the sequence is CQICFGMLYDPVVSPCGHTFCGPCLMQALTQSPQCPTCR. Positions 250-472 constitute a Lon N-terminal domain; that stretch reads ESWLPLFISM…LVLIWLTQLQ (223 aa).

This is LON peptidase N-terminal domain and RING finger protein C14F5.10c from Schizosaccharomyces pombe (strain 972 / ATCC 24843) (Fission yeast).